A 388-amino-acid polypeptide reads, in one-letter code: MKFIDEASIRVEAGDGGSGCVSFRREKYVPDGGPDGGDGGDGGSVFLQADENYNTLIDYRFERFHMAERGSNGRGRDCTGHGGVDLILKVPVGTRAVDDETQELIGDLTAHGQKLLVAKGGFHGLGNTRFKSSTNRAPRQKTLGTPGEVRSLRLELLLLADVGLLGMPNAGKSTFIRAVSRATPKVADYPFTTLVPNLGVVNPRPGQSFVIADIPGLIEGASDGAGLGIRFLKHLERCRVLLHILDIDPIDGSSPAEAAKAIVAELEKYSPKLAAKPRWLVFNKTDLMLEEDLQERVDAIVAEMDWQGDVYTMSAFNRIGTKELSLKLLDYIASLPPIDDSIDPDSEVEFKWDNYHEANTDSVNEDYNDDFDDDFDDDDYDVEVIYQR.

Positions 1-159 (MKFIDEASIR…RSLRLELLLL (159 aa)) constitute an Obg domain. Residues 160 to 333 (ADVGLLGMPN…LSLKLLDYIA (174 aa)) enclose the OBG-type G domain. GTP is bound by residues 166–173 (GMPNAGKS), 191–195 (FTTLV), 213–216 (DIPG), 283–286 (NKTD), and 314–316 (SAF). Residues S173 and T193 each coordinate Mg(2+).

It belongs to the TRAFAC class OBG-HflX-like GTPase superfamily. OBG GTPase family. Monomer. Requires Mg(2+) as cofactor.

The protein resides in the cytoplasm. Functionally, an essential GTPase which binds GTP, GDP and possibly (p)ppGpp with moderate affinity, with high nucleotide exchange rates and a fairly low GTP hydrolysis rate. Plays a role in control of the cell cycle, stress response, ribosome biogenesis and in those bacteria that undergo differentiation, in morphogenesis control. This is GTPase Obg from Shewanella denitrificans (strain OS217 / ATCC BAA-1090 / DSM 15013).